We begin with the raw amino-acid sequence, 388 residues long: Succinyl-diaminopimelate desuccinylase (388 aa).

Position 72 (His72) interacts with Zn(2+). The active site involves Asp74. Asp105 contributes to the Zn(2+) binding site. The active-site Proton acceptor is Glu139. Zn(2+)-binding residues include Glu140, Glu168, and His353.

It belongs to the peptidase M20A family. DapE subfamily. As to quaternary structure, homodimer. Zn(2+) is required as a cofactor. Co(2+) serves as cofactor.

It catalyses the reaction N-succinyl-(2S,6S)-2,6-diaminopimelate + H2O = (2S,6S)-2,6-diaminopimelate + succinate. The protein operates within amino-acid biosynthesis; L-lysine biosynthesis via DAP pathway; LL-2,6-diaminopimelate from (S)-tetrahydrodipicolinate (succinylase route): step 3/3. Its function is as follows. Catalyzes the hydrolysis of N-succinyl-L,L-diaminopimelic acid (SDAP), forming succinate and LL-2,6-diaminopimelate (DAP), an intermediate involved in the bacterial biosynthesis of lysine and meso-diaminopimelic acid, an essential component of bacterial cell walls. This Orientia tsutsugamushi (strain Ikeda) (Rickettsia tsutsugamushi) protein is Succinyl-diaminopimelate desuccinylase.